We begin with the raw amino-acid sequence, 65 residues long: Hirudin-2 (65 aa).

The tract at residues 1 to 3 (ITY) is interaction with thrombin active site. 3 disulfides stabilise this stretch: C6/C14, C16/C28, and C22/C39. Residues 39-65 (CVTGEGTPKPQSHNDGDFEEIPEEYLQ) are disordered. A glycan (O-linked (GalNAc...) threonine) is linked at T45. Positions 55–65 (DFEEIPEEYLQ) are interaction with fibrinogen-binding exosite of thrombin. The span at 55–65 (DFEEIPEEYLQ) shows a compositional bias: acidic residues. Y63 is modified (sulfotyrosine).

It belongs to the protease inhibitor I14 (hirudin) family.

It is found in the secreted. In terms of biological role, hirudin is a potent thrombin-specific protease inhibitor. It forms a stable non-covalent complex with alpha-thrombin, thereby abolishing its ability to cleave fibrinogen. This Hirudo medicinalis (Medicinal leech) protein is Hirudin-2.